A 252-amino-acid chain; its full sequence is Vacuolar iron transporter 1 (252 aa).

Over 1–38 (MAAATDGGGLPLLADKAASHSHHHHPERHFTSGEVVRD) the chain is Cytoplasmic. The helical transmembrane segment at 39-59 (VIMGVSDGLTVPFALAAGLSG) threads the bilayer. Residues 60–65 (ASAPSS) are Vacuolar-facing. A helical membrane pass occupies residues 66-86 (LVLTAGLAEVAAGAISMGLGG). Residues 87-170 (YLAAKSEADH…PDPKRAIQSA (84 aa)) lie on the Cytoplasmic side of the membrane. The segment at 92–167 (SEADHYQREM…LEKPDPKRAI (76 aa)) is cytoplasmic metal binding domain (MBD). Fe cation-binding residues include E104, E107, E115, E118, M151, and E155. The helical transmembrane segment at 171-191 (LTIALSYVIGGLVPLLPYMFI) threads the bilayer. At 192-196 (STAQN) the chain is on the vacuolar side. The chain crosses the membrane as a helical span at residues 197–217 (AMLTSVGVTLVALLFFGYIKG). The Cytoplasmic segment spans residues 218 to 224 (RFTGNRP). A helical membrane pass occupies residues 225–245 (FLSAVQTAIIGALASAAAYGM). Residues 246–252 (AKAVQTR) are Vacuolar-facing.

Belongs to the CCC1 family. Homodimer. The dimeric interaction is mediated by both the transmembrane domains (TMDs) and the cytoplasmic metal binding domain (MBD). In terms of tissue distribution, highly expressed in leaf blades. Expressed in leaf sheaths.

It localises to the vacuole membrane. It carries out the reaction Fe(2+)(in) = Fe(2+)(out). In terms of biological role, vacuolar iron transporter involved in the transfer of iron ions from the cytosol to the vacuole for intracellular iron storage. Vacuolar iron storage is required for seed embryo and seedling development. May be involved in the regulation of iron translocation between flag leaves and seeds. Can transport zinc ions from the cytosol to the vacuole. The polypeptide is Vacuolar iron transporter 1 (Oryza sativa subsp. japonica (Rice)).